The chain runs to 37 residues: Large ribosomal subunit protein bL36c (37 aa).

Belongs to the bacterial ribosomal protein bL36 family.

The protein localises to the plastid. It localises to the chloroplast. The chain is Large ribosomal subunit protein bL36c from Chara vulgaris (Common stonewort).